The sequence spans 564 residues: Protein CPR-5 (564 aa).

Residues 1–87 form a disordered region; the sequence is MEALLLPPSP…TSNSNSTKRV (87 aa). Over residues 12-28 the composition is skewed to polar residues; it reads PQNQITNPANSKPNHQS. The segment covering 29–38 has biased composition (basic and acidic residues); it reads GDVHKDETMM. Residues 69–84 are compositionally biased toward low complexity; the sequence is SSSYCSTSSTSNSNST. 5 consecutive transmembrane segments (helical) span residues 347-367, 411-431, 443-463, 472-492, and 526-546; these read IMDW…LGVY, VRVW…TYFL, PISF…KLCV, LWLI…VFTL, and VYVV…FATF.

Interacts with SIM and SMR1. As to expression, ubiquitous.

The protein localises to the membrane. It localises to the nucleus membrane. May play a role in transcriptional processes. Negatively regulates the senescence and chlorotic lesions induced by biotic (e.g. pathogens) and abiotic (e.g. sugars, darkness) agents, probably by controlling programmed cell death (pcd). Negative regulator of plant programmed cell death (PCD) and effector-triggered immunity (ETI). Promotes cell division and endoreduplication (e.g. in trichomes). This Arabidopsis thaliana (Mouse-ear cress) protein is Protein CPR-5.